The following is a 442-amino-acid chain: Putative aminohydrolase SsnA (442 aa).

Zn(2+) is bound by residues His-62, His-64, His-227, and Asp-312.

This sequence belongs to the metallo-dependent hydrolases superfamily. ATZ/TRZ family.

The polypeptide is Putative aminohydrolase SsnA (ssnA) (Escherichia coli (strain K12)).